A 458-amino-acid chain; its full sequence is RuvB-like helicase 1 (458 aa).

Position 71–78 (glycine 71–threonine 78) interacts with ATP.

The protein belongs to the RuvB family. In terms of assembly, may form heterododecamers with RVB2. Component of the SWR1 chromatin remodeling complex, the INO80 chromatin remodeling complex, and of the R2TP complex.

Its subcellular location is the nucleus. The enzyme catalyses ATP + H2O = ADP + phosphate + H(+). In terms of biological role, DNA helicase which participates in several chromatin remodeling complexes, including the SWR1 and the INO80 complexes. The SWR1 complex mediates the ATP-dependent exchange of histone H2A for the H2A variant HZT1 leading to transcriptional regulation of selected genes by chromatin remodeling. The INO80 complex remodels chromatin by shifting nucleosomes and is involved in DNA repair. Also involved in pre-rRNA processing. The protein is RuvB-like helicase 1 (RVB1) of Gibberella zeae (strain ATCC MYA-4620 / CBS 123657 / FGSC 9075 / NRRL 31084 / PH-1) (Wheat head blight fungus).